Here is a 417-residue protein sequence, read N- to C-terminus: MTPRLGTMRLACMFSSILLFGAAGLLLFISLQDPIELSPQQVPGIKFSIRPQQPQHDSHLRISTEKGTRDSPSGSPRGLQLQAPDQPRPHPKAAGSPLRLRQRRRRLLIKKMPAAGTNQGNNSSETFIQPRPRTMDSRWVSLHQTQQERKRVMREACAKYRASSSRRAVTPRHVSRIFVEDRHRVLYCEVPKAGCSNWKRVLMVLAGLASSTADIQHNTVHYGSALKRLDTFDRQGIVHRLSTYTKMLFVREPFERLVSAFRDKFEHPNSYYHPVFGKAILARYRANASREALRTGSGVQFPEFVQYLLDVHRPVGMDIHWDHVSRLCSPCLIDYDFVGKFESMEDDANFFLRLIHAPGNLTFPRFKDRHSEEARTTSRITHQYFAQLSSLQRQRTYDFYYMDYLMFNYSKPFSDLY.

Residues 1–10 (MTPRLGTMRL) are Cytoplasmic-facing. A helical; Signal-anchor for type II membrane protein transmembrane segment spans residues 11 to 31 (ACMFSSILLFGAAGLLLFISL). At 32 to 417 (QDPIELSPQQ…NYSKPFSDLY (386 aa)) the chain is on the lumenal side. Residues 47–101 (FSIRPQQPQHDSHLRISTEKGTRDSPSGSPRGLQLQAPDQPRPHPKAAGSPLRLR) form a disordered region. The segment covering 56-69 (HDSHLRISTEKGTR) has biased composition (basic and acidic residues). N121 and N122 each carry an N-linked (GlcNAc...) asparagine glycan. Residues 191–197 (PKAGCSN) and 251–259 (REPFERLVS) each bind 3'-phosphoadenylyl sulfate. Residues N287, N360, and N408 are each glycosylated (N-linked (GlcNAc...) asparagine).

It belongs to the sulfotransferase 2 family. Strongly expressed in brain. Weakly expressed in lung and kidney. Weakly expressed in pituitary.

The protein localises to the golgi apparatus membrane. Its function is as follows. Catalyzes the transfer of sulfate to position 4 of non-reducing N-acetylgalactosamine (GalNAc) residues in both N-glycans and O-glycans. Required for biosynthesis of glycoprotein hormones lutropin and thyrotropin, by mediating sulfation of their carbohydrate structures. Only active against terminal GalNAcbeta1,GalNAcbeta. Not active toward chondroitin. In Mus musculus (Mouse), this protein is Carbohydrate sulfotransferase 8 (Chst8).